The following is a 287-amino-acid chain: Probable aquaporin PIP1-4 (287 aa).

At methionine 1 the chain carries N-acetylmethionine. Residues 1-36 (MEGKEEDVRVGANKFPERQPIGTSAQSTDKDYKEPP) are disordered. At 1–55 (MEGKEEDVRVGANKFPERQPIGTSAQSTDKDYKEPPPAPLFEPGELSSWSFYRAG) the chain is on the cytoplasmic side. A helical membrane pass occupies residues 56-76 (IAEFIATFLFLYITVLTVMGV). The Extracellular portion of the chain corresponds to 77–92 (KRAPNMCASVGIQGIA). A helical transmembrane segment spans residues 93-113 (WAFGGMIFALVYCTAGISGGH). Residues 114–133 (INPAVTFGLFLARKLSLTRA) are Cytoplasmic-facing. The NPA 1 signature appears at 115–117 (NPA). Residues 134–154 (VFYMIMQCLGAICGAGVVKGF) form a helical membrane-spanning segment. Residues 155–175 (QPTPYQTLGGGANTVAHGYTK) lie on the Extracellular side of the membrane. Residues 176 to 196 (GSGLGAEIIGTFVLVYTVFSA) traverse the membrane as a helical segment. Topologically, residues 197–209 (TDAKRSARDSHVP) are cytoplasmic. A helical membrane pass occupies residues 210 to 230 (ILAPLPIGFAVFLVHLATIPI). Topologically, residues 231–257 (TGTGINPARSLGAAIIYNKDHSWDDHW) are extracellular. The NPA 2 motif lies at 236-238 (NPA). The chain crosses the membrane as a helical span at residues 258-278 (IFWVGPFIGAALAALYHQIVI). The Cytoplasmic portion of the chain corresponds to 279 to 287 (RAIPFKSKS). Serine 285 is modified (phosphoserine).

It belongs to the MIP/aquaporin (TC 1.A.8) family. PIP (TC 1.A.8.11) subfamily. As to expression, predominantly expressed in roots and green siliques. Also expressed above ground and in flower buds.

It is found in the cell membrane. Its function is as follows. Aquaporins facilitate the transport of water and small neutral solutes across cell membranes. This is Probable aquaporin PIP1-4 (PIP1.4) from Arabidopsis thaliana (Mouse-ear cress).